The following is a 178-amino-acid chain: Large ribosomal subunit protein uL5 (178 aa).

It belongs to the universal ribosomal protein uL5 family. In terms of assembly, part of the 50S ribosomal subunit; contacts the 5S rRNA and probably tRNA. Forms a bridge to the 30S subunit in the 70S ribosome.

Functionally, this is one of the proteins that bind and probably mediate the attachment of the 5S RNA into the large ribosomal subunit, where it forms part of the central protuberance. In the 70S ribosome it contacts protein S13 of the 30S subunit (bridge B1b), connecting the 2 subunits; this bridge is implicated in subunit movement. May contact the P site tRNA; the 5S rRNA and some of its associated proteins might help stabilize positioning of ribosome-bound tRNAs. The protein is Large ribosomal subunit protein uL5 of Sulfolobus acidocaldarius (strain ATCC 33909 / DSM 639 / JCM 8929 / NBRC 15157 / NCIMB 11770).